We begin with the raw amino-acid sequence, 203 residues long: Small ribosomal subunit protein uS4 (203 aa).

Residues 20–44 (LPGLTRKRPKNTNPPGMHGAERKKK) are disordered. The 64-residue stretch at 92 to 155 (MRLDCIVFRL…SSRKLVAAYA (64 aa)) folds into the S4 RNA-binding domain.

It belongs to the universal ribosomal protein uS4 family. Part of the 30S ribosomal subunit. Contacts protein S5. The interaction surface between S4 and S5 is involved in control of translational fidelity.

Functionally, one of the primary rRNA binding proteins, it binds directly to 16S rRNA where it nucleates assembly of the body of the 30S subunit. With S5 and S12 plays an important role in translational accuracy. The polypeptide is Small ribosomal subunit protein uS4 (Synechococcus sp. (strain JA-2-3B'a(2-13)) (Cyanobacteria bacterium Yellowstone B-Prime)).